The chain runs to 274 residues: NH(3)-dependent NAD(+) synthetase (274 aa).

46–53 (GISGGQDS) lines the ATP pocket. Asp52 contacts Mg(2+). Arg140 contacts deamido-NAD(+). Position 160 (Thr160) interacts with ATP. Position 165 (Glu165) interacts with Mg(2+). Lys173 and Asp180 together coordinate deamido-NAD(+). ATP is bound by residues Lys189 and Thr211. Residue 260–261 (HK) participates in deamido-NAD(+) binding.

It belongs to the NAD synthetase family. As to quaternary structure, homodimer.

The enzyme catalyses deamido-NAD(+) + NH4(+) + ATP = AMP + diphosphate + NAD(+) + H(+). Its pathway is cofactor biosynthesis; NAD(+) biosynthesis; NAD(+) from deamido-NAD(+) (ammonia route): step 1/1. Functionally, catalyzes the ATP-dependent amidation of deamido-NAD to form NAD. Uses ammonia as a nitrogen source. The polypeptide is NH(3)-dependent NAD(+) synthetase (Streptococcus pneumoniae (strain Hungary19A-6)).